Here is a 105-residue protein sequence, read N- to C-terminus: Antimicrobial peptide 1 (105 aa).

The signal sequence occupies residues 1-26; that stretch reads METKRLAYVMFVLVCLFLAMAQPSQA. 3 disulfides stabilise this stretch: cysteine 37–cysteine 93, cysteine 47–cysteine 105, and cysteine 49–cysteine 77.

Detected at higher levels in needles and twigs from canker-resistant seedlings than in needles from canker-susceptible plants. During summer, detected on cankered, healthy and marginal bark. During winter, detected at lower levels in cankered bark and bark from the canker margin than in healthy bark (at protein level).

The protein localises to the secreted. Its subcellular location is the cell wall. Its function is as follows. Antimicrobial peptide. This is Antimicrobial peptide 1 from Pinus monticola (Western white pine).